The sequence spans 281 residues: Nucleotide-binding protein Tpet_1006 (281 aa).

Position 9 to 16 (9 to 16 (GLSGAGKT)) interacts with ATP. Residue 58–61 (DVRS) participates in GTP binding.

It belongs to the RapZ-like family.

In terms of biological role, displays ATPase and GTPase activities. This Thermotoga petrophila (strain ATCC BAA-488 / DSM 13995 / JCM 10881 / RKU-1) protein is Nucleotide-binding protein Tpet_1006.